The sequence spans 197 residues: MTDFILNAQARTDLGKGASRRLRHSLSIPAVVYGGDKEAQSLTILAKEITKLFENEAAFSHVIELNVDGVKQNVIIKAMQRHPAKQFIMHADFVRVVAGQKLTAKVPVHFINEEAPVKKGGEISHVESEIEVSCEAKDLPEFIEVDLGNAEIGTIIHLSDLKAPKGVEFVALAHGDDKAVANVHAPRVAPEAEGAAE.

Belongs to the bacterial ribosomal protein bL25 family. CTC subfamily. Part of the 50S ribosomal subunit; part of the 5S rRNA/L5/L18/L25 subcomplex. Contacts the 5S rRNA. Binds to the 5S rRNA independently of L5 and L18.

In terms of biological role, this is one of the proteins that binds to the 5S RNA in the ribosome where it forms part of the central protuberance. The chain is Large ribosomal subunit protein bL25 from Pseudomonas putida (strain ATCC 700007 / DSM 6899 / JCM 31910 / BCRC 17059 / LMG 24140 / F1).